A 1386-amino-acid chain; its full sequence is DNA-directed RNA polymerase subunit beta' (1386 aa).

Positions 75, 77, 90, and 93 each coordinate Zn(2+). 3 residues coordinate Mg(2+): aspartate 466, aspartate 468, and aspartate 470. Positions 809, 883, 890, and 893 each coordinate Zn(2+).

Belongs to the RNA polymerase beta' chain family. As to quaternary structure, the RNAP catalytic core consists of 2 alpha, 1 beta, 1 beta' and 1 omega subunit. When a sigma factor is associated with the core the holoenzyme is formed, which can initiate transcription. The cofactor is Mg(2+). Requires Zn(2+) as cofactor.

It catalyses the reaction RNA(n) + a ribonucleoside 5'-triphosphate = RNA(n+1) + diphosphate. Functionally, DNA-dependent RNA polymerase catalyzes the transcription of DNA into RNA using the four ribonucleoside triphosphates as substrates. The chain is DNA-directed RNA polymerase subunit beta' from Oleidesulfovibrio alaskensis (strain ATCC BAA-1058 / DSM 17464 / G20) (Desulfovibrio alaskensis).